We begin with the raw amino-acid sequence, 269 residues long: Intermembrane phospholipid transport system ATP-binding protein MlaF (269 aa).

The ABC transporter domain occupies 9 to 245 (VDMRDVSFTR…PDPRVRQFLD (237 aa)). 41–48 (GPSGIGKT) contributes to the ATP binding site.

This sequence belongs to the ABC transporter superfamily. MlaF family. The complex is composed of two ATP-binding proteins (MlaF), two transmembrane proteins (MlaE), two cytoplasmic solute-binding proteins (MlaB) and six periplasmic solute-binding proteins (MlaD).

The protein resides in the cell inner membrane. In terms of biological role, part of the ABC transporter complex MlaFEDB, which is involved in a phospholipid transport pathway that maintains lipid asymmetry in the outer membrane by retrograde trafficking of phospholipids from the outer membrane to the inner membrane. Responsible for energy coupling to the transport system. The sequence is that of Intermembrane phospholipid transport system ATP-binding protein MlaF from Escherichia coli O157:H7.